We begin with the raw amino-acid sequence, 177 residues long: Protein-export protein SecB (177 aa).

Residues 1–22 (MSDENNSGAAAPEAQNPGQNAA) form a disordered region. Residues 8-22 (GAAAPEAQNPGQNAA) show a composition bias toward low complexity.

This sequence belongs to the SecB family. In terms of assembly, homotetramer, a dimer of dimers. One homotetramer interacts with 1 SecA dimer.

Its subcellular location is the cytoplasm. In terms of biological role, one of the proteins required for the normal export of preproteins out of the cell cytoplasm. It is a molecular chaperone that binds to a subset of precursor proteins, maintaining them in a translocation-competent state. It also specifically binds to its receptor SecA. This Paracoccus denitrificans (strain Pd 1222) protein is Protein-export protein SecB.